The chain runs to 31 residues: Dermaseptin-7.1TR (31 aa).

Position 31 is a glutamine amide (Gln31).

In terms of tissue distribution, expressed by the skin glands.

The protein localises to the secreted. Its function is as follows. Has antimicrobial activity. The chain is Dermaseptin-7.1TR from Phyllomedusa trinitatis (Trinidad leaf frog).